Here is a 354-residue protein sequence, read N- to C-terminus: Maleylacetate reductase 1 (354 aa).

The protein belongs to the iron-containing alcohol dehydrogenase family. As to quaternary structure, homodimer.

The catalysed reaction is 3-oxoadipate + NAD(+) = maleylacetate + NADH + H(+). The enzyme catalyses 3-oxoadipate + NADP(+) = maleylacetate + NADPH + H(+). The protein operates within aromatic compound metabolism; 3-chlorocatechol degradation. The sequence is that of Maleylacetate reductase 1 (tfdFI) from Cupriavidus pinatubonensis (strain JMP 134 / LMG 1197) (Cupriavidus necator (strain JMP 134)).